We begin with the raw amino-acid sequence, 328 residues long: L-lactate dehydrogenase (328 aa).

NAD(+) is bound by residues valine 18, glutamate 39, lysine 46, tyrosine 71, and 85-86 (GA). Positions 88 and 94 each coordinate substrate. NAD(+) is bound by residues serine 107, 124-126 (AAN), and serine 149. Position 126–129 (126–129 (NPVD)) interacts with substrate. 154–157 (DTAR) contributes to the substrate binding site. Residues arginine 159 and histidine 174 each coordinate beta-D-fructose 1,6-bisphosphate. Histidine 181 functions as the Proton acceptor in the catalytic mechanism. Tyrosine 226 is modified (phosphotyrosine). Threonine 235 contacts substrate.

Belongs to the LDH/MDH superfamily. LDH family. In terms of assembly, homotetramer.

It localises to the cytoplasm. The enzyme catalyses (S)-lactate + NAD(+) = pyruvate + NADH + H(+). It participates in fermentation; pyruvate fermentation to lactate; (S)-lactate from pyruvate: step 1/1. Allosterically activated by fructose 1,6-bisphosphate (FBP). Functionally, catalyzes the conversion of lactate to pyruvate. The chain is L-lactate dehydrogenase from Streptococcus mutans serotype c (strain ATCC 700610 / UA159).